The primary structure comprises 454 residues: CCA-adding enzyme (454 aa).

2 residues coordinate ATP: Ser-59 and Arg-62. 2 residues coordinate CTP: Ser-59 and Arg-62. Residues Asp-71, Asp-73, and Asp-125 each coordinate Mg(2+). Residues His-148, Lys-167, and Tyr-176 each coordinate ATP. Residues His-148, Lys-167, and Tyr-176 each coordinate CTP.

This sequence belongs to the tRNA nucleotidyltransferase/poly(A) polymerase family. Archaeal CCA-adding enzyme subfamily. In terms of assembly, homodimer. Mg(2+) serves as cofactor.

The enzyme catalyses a tRNA precursor + 2 CTP + ATP = a tRNA with a 3' CCA end + 3 diphosphate. It catalyses the reaction a tRNA with a 3' CCA end + 2 CTP + ATP = a tRNA with a 3' CCACCA end + 3 diphosphate. Functionally, catalyzes the addition and repair of the essential 3'-terminal CCA sequence in tRNAs without using a nucleic acid template. Adds these three nucleotides in the order of C, C, and A to the tRNA nucleotide-73, using CTP and ATP as substrates and producing inorganic pyrophosphate. tRNA 3'-terminal CCA addition is required both for tRNA processing and repair. Also involved in tRNA surveillance by mediating tandem CCA addition to generate a CCACCA at the 3' terminus of unstable tRNAs. While stable tRNAs receive only 3'-terminal CCA, unstable tRNAs are marked with CCACCA and rapidly degraded. The sequence is that of CCA-adding enzyme from Methanosarcina barkeri (strain Fusaro / DSM 804).